A 521-amino-acid polypeptide reads, in one-letter code: MGEITRALISVSDKRGVVEFARRLQDFGVEILSTGGTAKALMADGVAVQEVGDYTGFPELLEGRLKTLHPKIHGGLLAKRDDSSHTRQMAEYGIPAIDLLCVNLYPFAETIASADCTLEEAMENIDIGGPTMLRAAAKNWEGVTVLVDPDDYAAVLQEMEQSYGGVGASTRFRLATKVFAHTARYDGAIANYLSSLGPDGNRTTFPQTLSLQFKKAQDLRYGENPHQAAAFYRDGSGGGLADAHQLQGKELSYNNIGDGDAAVALVMEFAEPACCVVKHGNPCGVAVGPDLLGAYQRAWAGDPISAFGGIVACNRPLDAQTAELISDQFIEMVLAPAILPDARPILAKRKNLRVLAFDDGRAWRRTGWDYKRVRGGLLVQNFDQAMEAETDWKVVSERAPTVQEARDLAFVWRVGKYVRSNAIVYGREGQTVGIGAGQMSRVDAARCGVAKALELGFDLHGAALASDAFFPFRDGIDAAAAAGVKAIIQPGGSIRDEEVIASANEHGIAMVFTGVRHFRHG.

One can recognise an MGS-like domain in the interval 1–147; the sequence is MGEITRALIS…KNWEGVTVLV (147 aa).

The protein belongs to the PurH family.

The enzyme catalyses (6R)-10-formyltetrahydrofolate + 5-amino-1-(5-phospho-beta-D-ribosyl)imidazole-4-carboxamide = 5-formamido-1-(5-phospho-D-ribosyl)imidazole-4-carboxamide + (6S)-5,6,7,8-tetrahydrofolate. It carries out the reaction IMP + H2O = 5-formamido-1-(5-phospho-D-ribosyl)imidazole-4-carboxamide. It functions in the pathway purine metabolism; IMP biosynthesis via de novo pathway; 5-formamido-1-(5-phospho-D-ribosyl)imidazole-4-carboxamide from 5-amino-1-(5-phospho-D-ribosyl)imidazole-4-carboxamide (10-formyl THF route): step 1/1. Its pathway is purine metabolism; IMP biosynthesis via de novo pathway; IMP from 5-formamido-1-(5-phospho-D-ribosyl)imidazole-4-carboxamide: step 1/1. This is Bifunctional purine biosynthesis protein PurH from Acidithiobacillus ferrooxidans (strain ATCC 53993 / BNL-5-31) (Leptospirillum ferrooxidans (ATCC 53993)).